Consider the following 454-residue polypeptide: UDP-glycosyltransferase 79A2 (454 aa).

UDP-alpha-D-glucose contacts are provided by residues serine 269, 330–331, 348–356, and 370–373; these read WV, HAGYGSVIE, and KVDQ.

It belongs to the UDP-glycosyltransferase family.

May glycosylate diterpenes or flavonols in leaves. The polypeptide is UDP-glycosyltransferase 79A2 (Stevia rebaudiana (Stevia)).